A 489-amino-acid polypeptide reads, in one-letter code: Rhamnulokinase (489 aa).

13–17 (ASSGR) lines the ATP pocket. Residues Cys68 and Cys222 are joined by a disulfide bond. Substrate contacts are provided by residues Gly83 and 236-238 (HDT). Catalysis depends on Asp237, which acts as the Proton acceptor. Thr259 lines the ATP pocket. A substrate-binding site is contributed by Asn296. Gln304 contributes to the ATP binding site. A disulfide bridge links Cys353 with Cys370. Gly402 serves as a coordination point for ATP. Cys413 and Cys417 are oxidised to a cystine.

Belongs to the rhamnulokinase family. As to quaternary structure, monomer. Requires Mg(2+) as cofactor.

It catalyses the reaction L-rhamnulose + ATP = L-rhamnulose 1-phosphate + ADP + H(+). The protein operates within carbohydrate degradation; L-rhamnose degradation; glycerone phosphate from L-rhamnose: step 2/3. In terms of biological role, involved in the catabolism of L-rhamnose (6-deoxy-L-mannose). Catalyzes the transfer of the gamma-phosphate group from ATP to the 1-hydroxyl group of L-rhamnulose to yield L-rhamnulose 1-phosphate. This is Rhamnulokinase from Escherichia coli O7:K1 (strain IAI39 / ExPEC).